Consider the following 237-residue polypeptide: Phosphoribosylaminoimidazole-succinocarboxamide synthase (237 aa).

It belongs to the SAICAR synthetase family.

It carries out the reaction 5-amino-1-(5-phospho-D-ribosyl)imidazole-4-carboxylate + L-aspartate + ATP = (2S)-2-[5-amino-1-(5-phospho-beta-D-ribosyl)imidazole-4-carboxamido]succinate + ADP + phosphate + 2 H(+). Its pathway is purine metabolism; IMP biosynthesis via de novo pathway; 5-amino-1-(5-phospho-D-ribosyl)imidazole-4-carboxamide from 5-amino-1-(5-phospho-D-ribosyl)imidazole-4-carboxylate: step 1/2. The polypeptide is Phosphoribosylaminoimidazole-succinocarboxamide synthase (Marinobacter nauticus (strain ATCC 700491 / DSM 11845 / VT8) (Marinobacter aquaeolei)).